A 52-amino-acid chain; its full sequence is Ovomucoid (52 aa).

The 51-residue stretch at 2-52 (VDCSDYPKPVCTLEEMPLCGSDNKTYGNKCNFCNAVVDSNGTLTLSHFGKC) folds into the Kazal-like domain. Intrachain disulfides connect Cys4/Cys34, Cys12/Cys31, and Cys20/Cys52. The N-linked (GlcNAc...) asparagine glycan is linked to Asn41.

The protein resides in the secreted. This chain is Ovomucoid, found in Scythrops novaehollandiae (Channel-billed cuckoo).